The primary structure comprises 66 residues: Ocellatin-PT1 (66 aa).

A signal peptide spans 1-22; that stretch reads MAFLKKSLFLVLFLGLVSLSIC. The propeptide occupies 23–39; the sequence is DEEKRQDEDDDDDDDEE. Val66 is subject to Valine amide.

Expressed by the skin glands.

It localises to the secreted. Has antibacterial activity against Gram-negative bacterium E.coli ATCC 25922 (MIC=300 uM) but not against S.pneumoniae ATCC 700603, S.choleraesuis ATCC 14028 or Gram-positive bacterium S.aureus ATCC 29313. Shows virtually no hemolytic activity and no cytotoxicity. This Leptodactylus pustulatus (Ceara white-lipped frog) protein is Ocellatin-PT1.